The chain runs to 101 residues: MSDQEAKPSAEDLGDKKEGEYIKLKVIGQDSSEIHFKVKMTTHLKKLKESYCQRQGVPMNSLRFLFEGQRITDNHTPKELGMEEEDVIEVYQEQTGGHSTV.

A Ubiquitin-like domain is found at 20–97; that stretch reads EYIKLKVIGQ…IEVYQEQTGG (78 aa). Gly-97 is covalently cross-linked (Glycyl lysine isopeptide (Gly-Lys) (interchain with K-? in acceptor proteins)). A propeptide spanning residues 98–101 is cleaved from the precursor; the sequence is HSTV.

The protein belongs to the ubiquitin family. SUMO subfamily. In terms of assembly, interacts with SAE2, UBE2I, RANBP2, PIAS1 and PIAS2. Covalently attached to a number of proteins. Post-translationally, cleavage of precursor form by a sentrin-specific protease is necessary for function.

It is found in the nucleus membrane. The protein resides in the nucleus speckle. It localises to the cytoplasm. The protein localises to the nucleus. Its subcellular location is the PML body. It is found in the cell membrane. In terms of biological role, ubiquitin-like protein that can be covalently attached to proteins as a monomer or a lysine-linked polymer. Covalent attachment via an isopeptide bond to its substrates requires prior activation by the E1 complex SAE1-SAE2 and linkage to the E2 enzyme UBE2I. This post-translational modification on lysine residues of proteins plays a crucial role in a number of cellular processes such as nuclear transport, DNA replication and repair, mitosis and signal transduction. Polymeric SUMO1 chains are also susceptible to polyubiquitination which functions as a signal for proteasomal degradation of modified proteins. The chain is Small ubiquitin-related modifier 1 (SUMO1) from Gallus gallus (Chicken).